The primary structure comprises 129 residues: Small ribosomal subunit protein uS11 (129 aa).

Belongs to the universal ribosomal protein uS11 family. In terms of assembly, part of the 30S ribosomal subunit. Interacts with proteins S7 and S18. Binds to IF-3.

Located on the platform of the 30S subunit, it bridges several disparate RNA helices of the 16S rRNA. Forms part of the Shine-Dalgarno cleft in the 70S ribosome. This Bacillus mycoides (strain KBAB4) (Bacillus weihenstephanensis) protein is Small ribosomal subunit protein uS11.